The following is a 108-amino-acid chain: Ribonuclease P protein component (108 aa).

Belongs to the RnpA family. As to quaternary structure, consists of a catalytic RNA component (M1 or rnpB) and a protein subunit.

It carries out the reaction Endonucleolytic cleavage of RNA, removing 5'-extranucleotides from tRNA precursor.. RNaseP catalyzes the removal of the 5'-leader sequence from pre-tRNA to produce the mature 5'-terminus. It can also cleave other RNA substrates such as 4.5S RNA. The protein component plays an auxiliary but essential role in vivo by binding to the 5'-leader sequence and broadening the substrate specificity of the ribozyme. In Campylobacter jejuni subsp. doylei (strain ATCC BAA-1458 / RM4099 / 269.97), this protein is Ribonuclease P protein component.